Consider the following 84-residue polypeptide: Cell division topological specificity factor (84 aa).

The protein belongs to the MinE family.

In terms of biological role, prevents the cell division inhibition by proteins MinC and MinD at internal division sites while permitting inhibition at polar sites. This ensures cell division at the proper site by restricting the formation of a division septum at the midpoint of the long axis of the cell. This Azotobacter vinelandii (strain DJ / ATCC BAA-1303) protein is Cell division topological specificity factor.